A 123-amino-acid polypeptide reads, in one-letter code: uncharacterized protein (123 aa).

The chain crosses the membrane as a helical span at residues 34 to 53 (LPFFFLFLGNLGKFFFLWPL).

It is found in the membrane. This is an uncharacterized protein from Saccharomyces cerevisiae (strain ATCC 204508 / S288c) (Baker's yeast).